The primary structure comprises 276 residues: Protein G1 (276 aa).

Disordered regions lie at residues 1–30 (MSSS…SQKR) and 178–213 (SYHK…ATAP). Positions 21–30 (RPSRYESQKR) are enriched in basic and acidic residues. Residues 24–183 (RYESQKRRDW…ARGISYHKKK (160 aa)) enclose the ALOG domain. The segment covering 178 to 187 (SYHKKKKRRG) has biased composition (basic residues). The Nuclear localization signal motif lies at 181–185 (KKKKR). A compositionally biased stretch (gly residues) spans 189 to 202 (NMNGARGGGGGGAR). Residues 203 to 213 (AGVNDGDATAP) are compositionally biased toward low complexity.

This sequence belongs to the plant homeotic and developmental regulators ALOG protein family. As to expression, expressed at the empty glumes of immature spikelets, which are lemmas of the sterile florets located at the lateral side of the spikelet, throughout their development.

The protein localises to the nucleus. In terms of biological role, probable transcription regulator that acts as a developmental regulator by promoting cell growth in response to light. Transcription regulator that restrains empty glumes growth, lemmas of the sterile florets located at the lateral side of the rice spikelet, to maintain their small size, probably by repressing lemma identity via transcription regulation. The chain is Protein G1 (G1) from Oryza sativa subsp. japonica (Rice).